A 351-amino-acid polypeptide reads, in one-letter code: Histidinol-phosphate aminotransferase (351 aa).

Residue lysine 213 is modified to N6-(pyridoxal phosphate)lysine.

It belongs to the class-II pyridoxal-phosphate-dependent aminotransferase family. Histidinol-phosphate aminotransferase subfamily. As to quaternary structure, homodimer. Pyridoxal 5'-phosphate serves as cofactor.

The enzyme catalyses L-histidinol phosphate + 2-oxoglutarate = 3-(imidazol-4-yl)-2-oxopropyl phosphate + L-glutamate. Its pathway is amino-acid biosynthesis; L-histidine biosynthesis; L-histidine from 5-phospho-alpha-D-ribose 1-diphosphate: step 7/9. In Clostridium kluyveri (strain NBRC 12016), this protein is Histidinol-phosphate aminotransferase.